The following is a 227-amino-acid chain: MCRHVAWLGAPRSLADLVLDPPQGLLVQSYAPRRQKHGLMNADGWGAGFFDDEGVARRWRSDKPLWGDASFASVAPALRSRCVLAAVRSATIGMPIEPSASAPFSDGQWLLSHNGLVDRGVLPLTGAAESTVDSAIVAALIFSRGLDALGATIAEVGELDPNARLNILAANGSRLLATTWGDTLSVLHRPDGVVLASEPYDDDPGWSDIPDRHLVDVRDAHVVVTPL.

Cys2 serves as the catalytic Nucleophile. One can recognise a Glutamine amidotransferase type-2 domain in the interval 2–227 (CRHVAWLGAP…RDAHVVVTPL (226 aa)).

The enzyme catalyses gamma-L-glutamyl-hercynylcysteine S-oxide + H2O = S-(hercyn-2-yl)-L-cysteine S-oxide + L-glutamate. It functions in the pathway amino-acid biosynthesis; ergothioneine biosynthesis. Functionally, catalyzes the hydrolysis of the gamma-glutamyl amide bond of hercynyl-gamma-L-glutamyl-L-cysteine sulfoxide to produce hercynylcysteine sulfoxide, a step in the biosynthesis pathway of ergothioneine. This chain is Gamma-glutamyl-hercynylcysteine sulfoxide hydrolase, found in Mycolicibacterium smegmatis (strain ATCC 700084 / mc(2)155) (Mycobacterium smegmatis).